The chain runs to 416 residues: Peptide chain release factor subunit 1 (416 aa).

The protein belongs to the eukaryotic release factor 1 family. In terms of assembly, heterodimer of two subunits, one of which binds GTP.

Its subcellular location is the cytoplasm. Directs the termination of nascent peptide synthesis (translation) in response to the termination codons UAA, UAG and UGA. The chain is Peptide chain release factor subunit 1 from Halorubrum lacusprofundi (strain ATCC 49239 / DSM 5036 / JCM 8891 / ACAM 34).